The sequence spans 662 residues: DNA ligase (662 aa).

NAD(+) contacts are provided by residues 34–38 (DYEYD), 83–84 (SI), and Glu113. The active-site N6-AMP-lysine intermediate is the Lys115. NAD(+) contacts are provided by Arg136, Glu172, Lys286, and Lys310. Positions 404, 407, 422, and 427 each coordinate Zn(2+). Positions 583–662 (KSGSTCFGKA…EAFTNLIHLE (80 aa)) constitute a BRCT domain.

It belongs to the NAD-dependent DNA ligase family. LigA subfamily. Mg(2+) is required as a cofactor. Requires Mn(2+) as cofactor.

It carries out the reaction NAD(+) + (deoxyribonucleotide)n-3'-hydroxyl + 5'-phospho-(deoxyribonucleotide)m = (deoxyribonucleotide)n+m + AMP + beta-nicotinamide D-nucleotide.. Its function is as follows. DNA ligase that catalyzes the formation of phosphodiester linkages between 5'-phosphoryl and 3'-hydroxyl groups in double-stranded DNA using NAD as a coenzyme and as the energy source for the reaction. It is essential for DNA replication and repair of damaged DNA. The sequence is that of DNA ligase from Chlamydia pneumoniae (Chlamydophila pneumoniae).